An 86-amino-acid chain; its full sequence is Small ribosomal subunit protein bS16 (86 aa).

Belongs to the bacterial ribosomal protein bS16 family.

This Stenotrophomonas maltophilia (strain R551-3) protein is Small ribosomal subunit protein bS16.